Consider the following 108-residue polypeptide: Large ribosomal subunit protein uL24 (108 aa).

The segment at 46–65 (RHTRVQQSSRGSQSGGIVTQ) is disordered. Residues 51 to 61 (QQSSRGSQSGG) show a composition bias toward low complexity.

The protein belongs to the universal ribosomal protein uL24 family. Part of the 50S ribosomal subunit.

One of two assembly initiator proteins, it binds directly to the 5'-end of the 23S rRNA, where it nucleates assembly of the 50S subunit. Functionally, one of the proteins that surrounds the polypeptide exit tunnel on the outside of the subunit. The polypeptide is Large ribosomal subunit protein uL24 (Parafrankia sp. (strain EAN1pec)).